The sequence spans 132 residues: Small ribosomal subunit protein uS8 (132 aa).

Belongs to the universal ribosomal protein uS8 family. In terms of assembly, part of the 30S ribosomal subunit. Contacts proteins S5 and S12.

In terms of biological role, one of the primary rRNA binding proteins, it binds directly to 16S rRNA central domain where it helps coordinate assembly of the platform of the 30S subunit. The protein is Small ribosomal subunit protein uS8 of Streptococcus pneumoniae (strain Taiwan19F-14).